Here is a 202-residue protein sequence, read N- to C-terminus: Coiled-coil domain-containing protein 85B (202 aa).

An N-acetylmethionine modification is found at M1. Coiled coils occupy residues R44–C82 and Q118–C141. The span at G152 to A162 shows a compositional bias: gly residues. A disordered region spans residues G152 to D202. Positions D180 to S190 are enriched in low complexity.

Belongs to the CCDC85 family. As to quaternary structure, interacts with CEBPB. May interact with CEBPD. Interacts with EURL. Interacts with MCRS1. Interacts with TCF7L2; competes with CTNNB1. Interacts with ANKRD26. Interacts with the beta-catenin family proteins ARVCF, CTNND1, CTNND2 and PKP4. As to expression, expressed in white and brown adipose tissue.

Its subcellular location is the nucleus. It localises to the cytoplasm. The protein resides in the cytoskeleton. The protein localises to the microtubule organizing center. It is found in the centrosome. Its subcellular location is the cell junction. It localises to the adherens junction. Its function is as follows. Functions as a transcriptional repressor. May inhibit the activity of CTNNB1 in a TP53-dependent manner and thus regulate cell growth. May function in adipocyte differentiation, negatively regulating mitotic clonal expansion. Plays a role in cell-cell adhesion and epithelium development through its interaction with proteins of the beta-catenin family. This chain is Coiled-coil domain-containing protein 85B (Ccdc85b), found in Mus musculus (Mouse).